A 133-amino-acid chain; its full sequence is Small ribosomal subunit protein uS11 (133 aa).

This sequence belongs to the universal ribosomal protein uS11 family. In terms of assembly, part of the 30S ribosomal subunit. Interacts with proteins S7 and S18. Binds to IF-3.

In terms of biological role, located on the platform of the 30S subunit, it bridges several disparate RNA helices of the 16S rRNA. Forms part of the Shine-Dalgarno cleft in the 70S ribosome. This Cupriavidus metallidurans (strain ATCC 43123 / DSM 2839 / NBRC 102507 / CH34) (Ralstonia metallidurans) protein is Small ribosomal subunit protein uS11.